The primary structure comprises 337 residues: Putative carboxypeptidase TP_0688 (337 aa).

The Nucleophile role is filled by Ser118. Residues Glu234 and His302 each act as charge relay system in the active site.

The protein belongs to the peptidase S66 family.

This is Putative carboxypeptidase TP_0688 from Treponema pallidum (strain Nichols).